We begin with the raw amino-acid sequence, 536 residues long: CTP synthase (536 aa).

The interval M1 to L267 is amidoligase domain. CTP is bound at residue S13. A UTP-binding site is contributed by S13. S14–I19 contacts ATP. Y54 provides a ligand contact to L-glutamine. Residue D71 participates in ATP binding. Mg(2+) is bound by residues D71 and E141. CTP is bound by residues D148–E150, K188–Q193, and K224. Residues K188 to Q193 and K224 contribute to the UTP site. The Glutamine amidotransferase type-1 domain maps to K292–A535. Residue G354 participates in L-glutamine binding. The Nucleophile; for glutamine hydrolysis role is filled by C381. L-glutamine is bound by residues L382–Q385, E405, and R463. Catalysis depends on residues H508 and E510.

This sequence belongs to the CTP synthase family. In terms of assembly, homotetramer.

The enzyme catalyses UTP + L-glutamine + ATP + H2O = CTP + L-glutamate + ADP + phosphate + 2 H(+). It catalyses the reaction L-glutamine + H2O = L-glutamate + NH4(+). It carries out the reaction UTP + NH4(+) + ATP = CTP + ADP + phosphate + 2 H(+). It functions in the pathway pyrimidine metabolism; CTP biosynthesis via de novo pathway; CTP from UDP: step 2/2. With respect to regulation, allosterically activated by GTP, when glutamine is the substrate; GTP has no effect on the reaction when ammonia is the substrate. The allosteric effector GTP functions by stabilizing the protein conformation that binds the tetrahedral intermediate(s) formed during glutamine hydrolysis. Inhibited by the product CTP, via allosteric rather than competitive inhibition. Catalyzes the ATP-dependent amination of UTP to CTP with either L-glutamine or ammonia as the source of nitrogen. Regulates intracellular CTP levels through interactions with the four ribonucleotide triphosphates. This Streptococcus mutans serotype c (strain ATCC 700610 / UA159) protein is CTP synthase.